The primary structure comprises 250 residues: MLGSVKKTLFGVLCLGALCLRGLMAEPDAKELVSLGIESVKKQDFAQAKAHFEKACELKEGFGCVFLGAFYEEGKGVGKDLKKAIQFYTKGCELNDGYGCRLLGNLYYNGQGVSKDAKKASQYYSKSCELNHAEGCTVLGSLHHYGVGTPKDLRKALDLYEKACDLKDSPGCINAGYMYGVAKNFKEAIVRYSKACELKDGRGCYNLGVMQYNAQGTAKDEKQAVENFKKGCKSSVKEACDALKELKIEL.

The signal sequence occupies residues 1–25; it reads MLGSVKKTLFGVLCLGALCLRGLMA. TPR repeat units follow at residues 29-62, 67-98, 100-133, 134-169, and 170-202; these read AKELVSLGIESVKKQDFAQAKAHFEKACELKEGF, LGAFYEEGKGVGKDLKKAIQFYTKGCELNDGY, CRLLGNLYYNGQGVSKDAKKASQYYSKSCELNHA, EGCTVLGSLHHYGVGTPKDLRKALDLYEKACDLKDS, and PGCINAGYMYGVAKNFKEAIVRYSKACELKDGR. 6 disulfide bridges follow: Cys56-Cys64, Cys92-Cys100, Cys128-Cys136, Cys164-Cys172, Cys196-Cys204, and Cys232-Cys240.

The protein belongs to the hcp beta-lactamase family.

The protein resides in the secreted. The catalysed reaction is a beta-lactam + H2O = a substituted beta-amino acid. With respect to regulation, inhibited by cloxacillin and oxacillin but not by ACA derivatives or metal chelators. Slowly hydrolyzes 6-aminopenicillinic acid and 7-aminocephalosporanic acid (ACA) derivatives. May be involved in the synthesis of the cell wall peptidoglycan. The protein is Beta-lactamase HcpA (hcpA) of Helicobacter pylori (strain J99 / ATCC 700824) (Campylobacter pylori J99).